Reading from the N-terminus, the 689-residue chain is Glycine--tRNA ligase beta subunit (689 aa).

This sequence belongs to the class-II aminoacyl-tRNA synthetase family. Tetramer of two alpha and two beta subunits.

It localises to the cytoplasm. It catalyses the reaction tRNA(Gly) + glycine + ATP = glycyl-tRNA(Gly) + AMP + diphosphate. The protein is Glycine--tRNA ligase beta subunit of Salmonella schwarzengrund (strain CVM19633).